The primary structure comprises 445 residues: Bifunctional protein GlmU (445 aa).

The segment at 1–218 (MRALVLAAGK…LLEITGVNTR (218 aa)) is pyrophosphorylase. UDP-N-acetyl-alpha-D-glucosamine is bound by residues 6–9 (LAAG), Lys-20, Gln-69, 74–75 (GT), 96–98 (YGD), Gly-134, Glu-147, Asn-162, and Asn-216. Asp-98 lines the Mg(2+) pocket. Asn-216 lines the Mg(2+) pocket. Residues 219–239 (KTLVWLEEQLRMRKIEELLEN) form a linker region. Residues 240-445 (GVTILDPATT…GWVLKKRKEE (206 aa)) form an N-acetyltransferase region. UDP-N-acetyl-alpha-D-glucosamine-binding residues include Arg-321 and Lys-339. The Proton acceptor role is filled by His-351. The UDP-N-acetyl-alpha-D-glucosamine site is built by Tyr-354 and Asn-365. Acetyl-CoA-binding positions include Ala-368, 374–375 (NY), Ser-393, Ala-411, and Arg-428.

This sequence in the N-terminal section; belongs to the N-acetylglucosamine-1-phosphate uridyltransferase family. In the C-terminal section; belongs to the transferase hexapeptide repeat family. In terms of assembly, homotrimer. The cofactor is Mg(2+).

The protein resides in the cytoplasm. The catalysed reaction is alpha-D-glucosamine 1-phosphate + acetyl-CoA = N-acetyl-alpha-D-glucosamine 1-phosphate + CoA + H(+). It carries out the reaction N-acetyl-alpha-D-glucosamine 1-phosphate + UTP + H(+) = UDP-N-acetyl-alpha-D-glucosamine + diphosphate. Its pathway is nucleotide-sugar biosynthesis; UDP-N-acetyl-alpha-D-glucosamine biosynthesis; N-acetyl-alpha-D-glucosamine 1-phosphate from alpha-D-glucosamine 6-phosphate (route II): step 2/2. It functions in the pathway nucleotide-sugar biosynthesis; UDP-N-acetyl-alpha-D-glucosamine biosynthesis; UDP-N-acetyl-alpha-D-glucosamine from N-acetyl-alpha-D-glucosamine 1-phosphate: step 1/1. It participates in bacterial outer membrane biogenesis; LPS lipid A biosynthesis. Functionally, catalyzes the last two sequential reactions in the de novo biosynthetic pathway for UDP-N-acetylglucosamine (UDP-GlcNAc). The C-terminal domain catalyzes the transfer of acetyl group from acetyl coenzyme A to glucosamine-1-phosphate (GlcN-1-P) to produce N-acetylglucosamine-1-phosphate (GlcNAc-1-P), which is converted into UDP-GlcNAc by the transfer of uridine 5-monophosphate (from uridine 5-triphosphate), a reaction catalyzed by the N-terminal domain. This Thermotoga maritima (strain ATCC 43589 / DSM 3109 / JCM 10099 / NBRC 100826 / MSB8) protein is Bifunctional protein GlmU.